Consider the following 261-residue polypeptide: Carnitinyl-CoA dehydratase (261 aa).

Residue Glu-111 is the Nucleophile of the active site. The Proton acceptor role is filled by Glu-131.

Belongs to the enoyl-CoA hydratase/isomerase family.

It catalyses the reaction (R)-carnitinyl-CoA = crotonobetainyl-CoA + H2O. Its pathway is amine and polyamine metabolism; carnitine metabolism. Functionally, catalyzes the reversible dehydration of L-carnitinyl-CoA to crotonobetainyl-CoA. The protein is Carnitinyl-CoA dehydratase of Salmonella arizonae (strain ATCC BAA-731 / CDC346-86 / RSK2980).